The following is a 261-amino-acid chain: Chitinase 8 (261 aa).

An N-terminal signal peptide occupies residues 1–29 (MTTTTTRFVQLAACAAASLLAVAASGAAA). 2 cysteine pairs are disulfide-bonded: Cys53/Cys115 and Cys221/Cys253. Glu98 acts as the Proton donor in catalysis.

This sequence belongs to the glycosyl hydrolase 19 family. Chitinase class II subfamily. In terms of tissue distribution, expressed in roots, leaves, sheaths and meristems.

The enzyme catalyses Random endo-hydrolysis of N-acetyl-beta-D-glucosaminide (1-&gt;4)-beta-linkages in chitin and chitodextrins.. The polypeptide is Chitinase 8 (Cht8) (Oryza sativa subsp. japonica (Rice)).